Consider the following 336-residue polypeptide: Biotin synthase (336 aa).

One can recognise a Radical SAM core domain in the interval 52-279 (KAIQLSTLMS…KSYVRLSAGR (228 aa)). [4Fe-4S] cluster contacts are provided by Cys-67, Cys-71, and Cys-74. [2Fe-2S] cluster contacts are provided by Cys-111, Cys-142, Cys-202, and Arg-274.

The protein belongs to the radical SAM superfamily. Biotin synthase family. As to quaternary structure, homodimer. [4Fe-4S] cluster serves as cofactor. Requires [2Fe-2S] cluster as cofactor.

It catalyses the reaction (4R,5S)-dethiobiotin + (sulfur carrier)-SH + 2 reduced [2Fe-2S]-[ferredoxin] + 2 S-adenosyl-L-methionine = (sulfur carrier)-H + biotin + 2 5'-deoxyadenosine + 2 L-methionine + 2 oxidized [2Fe-2S]-[ferredoxin]. The protein operates within cofactor biosynthesis; biotin biosynthesis; biotin from 7,8-diaminononanoate: step 2/2. In terms of biological role, catalyzes the conversion of dethiobiotin (DTB) to biotin by the insertion of a sulfur atom into dethiobiotin via a radical-based mechanism. The polypeptide is Biotin synthase (Pasteurella multocida (strain Pm70)).